The primary structure comprises 415 residues: Ankyrin repeat domain-containing protein 10 (415 aa).

ANK repeat units follow at residues 20-49 (SLRF…RAHL), 56-85 (YGWT…SLNV), 90-119 (YAQT…NINK), and 123-152 (EGET…HTDL). The segment covering 303–325 (TGSNGVSNGQPLSSGQASVSANG) has biased composition (polar residues). Residues 303–330 (TGSNGVSNGQPLSSGQASVSANGTEEPE) are disordered.

In Mus musculus (Mouse), this protein is Ankyrin repeat domain-containing protein 10 (Ankrd10).